A 413-amino-acid chain; its full sequence is GTPase HflX (413 aa).

The 187-residue stretch at 200–386 (VRVALVGYTN…KVYETVREIH (187 aa)) folds into the Hflx-type G domain. GTP contacts are provided by residues 206 to 213 (GYTNVGKS), 231 to 235 (FATLD), 252 to 255 (DTVG), 318 to 321 (NKID), and 364 to 366 (SAT). Residues serine 213 and threonine 233 each coordinate Mg(2+).

Belongs to the TRAFAC class OBG-HflX-like GTPase superfamily. HflX GTPase family. In terms of assembly, monomer. Associates with the 50S ribosomal subunit. Requires Mg(2+) as cofactor.

The protein localises to the cytoplasm. Its function is as follows. GTPase that associates with the 50S ribosomal subunit and may have a role during protein synthesis or ribosome biogenesis. The protein is GTPase HflX of Flavobacterium psychrophilum (strain ATCC 49511 / DSM 21280 / CIP 103535 / JIP02/86).